A 247-amino-acid chain; its full sequence is Aliphatic sulfonates import ATP-binding protein SsuB 2 (247 aa).

The region spanning 28-242 (VSVRGLQRRY…ALRPILLEEL (215 aa)) is the ABC transporter domain. 60-67 (GESGCGKT) is an ATP binding site.

This sequence belongs to the ABC transporter superfamily. Aliphatic sulfonates importer (TC 3.A.1.17.2) family. In terms of assembly, the complex is composed of two ATP-binding proteins (SsuB), two transmembrane proteins (SsuC) and a solute-binding protein (SsuA).

The protein resides in the cell inner membrane. It catalyses the reaction ATP + H2O + aliphatic sulfonate-[sulfonate-binding protein]Side 1 = ADP + phosphate + aliphatic sulfonateSide 2 + [sulfonate-binding protein]Side 1.. In terms of biological role, part of the ABC transporter complex SsuABC involved in aliphatic sulfonates import. Responsible for energy coupling to the transport system. This chain is Aliphatic sulfonates import ATP-binding protein SsuB 2, found in Paraburkholderia xenovorans (strain LB400).